Reading from the N-terminus, the 367-residue chain is Aminomethyltransferase (367 aa).

The protein belongs to the GcvT family. As to quaternary structure, the glycine cleavage system is composed of four proteins: P, T, L and H.

The enzyme catalyses N(6)-[(R)-S(8)-aminomethyldihydrolipoyl]-L-lysyl-[protein] + (6S)-5,6,7,8-tetrahydrofolate = N(6)-[(R)-dihydrolipoyl]-L-lysyl-[protein] + (6R)-5,10-methylene-5,6,7,8-tetrahydrofolate + NH4(+). In terms of biological role, the glycine cleavage system catalyzes the degradation of glycine. This Mycobacterium avium (strain 104) protein is Aminomethyltransferase.